The primary structure comprises 202 residues: NADH-quinone oxidoreductase subunit C (202 aa).

The protein belongs to the complex I 30 kDa subunit family. NDH-1 is composed of 14 different subunits. Subunits NuoB, C, D, E, F, and G constitute the peripheral sector of the complex.

Its subcellular location is the cell inner membrane. It carries out the reaction a quinone + NADH + 5 H(+)(in) = a quinol + NAD(+) + 4 H(+)(out). Its function is as follows. NDH-1 shuttles electrons from NADH, via FMN and iron-sulfur (Fe-S) centers, to quinones in the respiratory chain. The immediate electron acceptor for the enzyme in this species is believed to be ubiquinone. Couples the redox reaction to proton translocation (for every two electrons transferred, four hydrogen ions are translocated across the cytoplasmic membrane), and thus conserves the redox energy in a proton gradient. The protein is NADH-quinone oxidoreductase subunit C of Acidovorax sp. (strain JS42).